The sequence spans 145 residues: uncharacterized protein (145 aa).

The chain crosses the membrane as a helical span at residues 104-124 (IEVIILSHHFVIGFSFLLGLL).

It is found in the membrane. This is an uncharacterized protein from Saccharomyces cerevisiae (strain ATCC 204508 / S288c) (Baker's yeast).